The primary structure comprises 445 residues: Rab GDP dissociation inhibitor beta (445 aa).

An N-acetylmethionine modification is found at M1. K57 carries the post-translational modification N6-succinyllysine. S61 is modified (phosphoserine). At K112 the chain carries N6-acetyllysine. S130 bears the Phosphoserine mark. An N6-acetyllysine modification is found at K269. Position 382 is a phosphoserine (S382).

This sequence belongs to the Rab GDI family. Interacts with RHOH. Interacts with the GDP-bound inactive forms of RAB3A, RAB3B, RAB3C, RAB5A, RAB5B, RAB5C, RAB8A, RAB8B, RAB10, RAB12, RAB35, and RAB43; binds RAB3D to a lesser extent. Interacts with DZIP1; this interaction negatively regulates the interaction of GDI2 with GDP-bound RAB8A. In terms of tissue distribution, ubiquitous.

Its subcellular location is the cytoplasm. It is found in the membrane. It localises to the golgi apparatus. The protein resides in the trans-Golgi network. Functionally, GDP-dissociation inhibitor preventing the GDP to GTP exchange of most Rab proteins. By keeping these small GTPases in their inactive GDP-bound form regulates intracellular membrane trafficking. Negatively regulates protein transport to the cilium and ciliogenesis through the inhibition of RAB8A. In Homo sapiens (Human), this protein is Rab GDP dissociation inhibitor beta (GDI2).